A 141-amino-acid polypeptide reads, in one-letter code: Putative nickel-responsive regulator (141 aa).

Histidine 80, histidine 91, histidine 93, and cysteine 99 together coordinate Ni(2+).

The protein belongs to the transcriptional regulatory CopG/NikR family. Ni(2+) is required as a cofactor.

Transcriptional regulator. This Methanococcus aeolicus (strain ATCC BAA-1280 / DSM 17508 / OCM 812 / Nankai-3) protein is Putative nickel-responsive regulator.